Reading from the N-terminus, the 526-residue chain is Protein spinster homolog 1 (526 aa).

Positions 1–43 are disordered; that stretch reads MTSRSSQGDAAPFLTQADNTEEEGAPDPGGHSSDEEEEEGKDH. Helical transmembrane passes span 48-68, 98-118, 126-146, 159-179, 187-207, 218-238, 272-292, 321-341, 355-375, 385-405, 419-439, and 463-483; these read HLLT…LFYI, GLVQ…FGYL, LIMC…SFVS, LVGV…ADLF, MLSF…IAGS, WALR…IFVA, FILS…LALW, MIFG…GVEI, LVCA…LAFA, FIFI…DILL, LQIV…IGVI, and MICA…ALFI.

The protein belongs to the major facilitator superfamily. Spinster (TC 2.A.1.49) family.

It is found in the lysosome membrane. The catalysed reaction is a 1-acyl-sn-glycero-3-phosphocholine(out) + H(+)(out) = a 1-acyl-sn-glycero-3-phosphocholine(in) + H(+)(in). It catalyses the reaction a 1-acyl-sn-glycero-3-phosphoethanolamine(out) + H(+)(out) = a 1-acyl-sn-glycero-3-phosphoethanolamine(in) + H(+)(in). The enzyme catalyses a 1-O-(1Z-alkenyl)-sn-glycero-3-phosphocholine(out) + H(+)(out) = a 1-O-(1Z-alkenyl)-sn-glycero-3-phosphocholine(in) + H(+)(in). It carries out the reaction a 1-O-(1Z-alkenyl)-sn-glycero-3-phosphoethanolamine(out) + H(+)(out) = a 1-O-(1Z-alkenyl)-sn-glycero-3-phosphoethanolamine(in) + H(+)(in). Functionally, mediates the rate-limiting, proton-dependent, lysosomal efflux of lysophospholipids. Selective for zwitterionic headgroups such as lysophosphatidylcholine (LPC) and lysophosphatidylethanolamine (LPE). Essential player in lysosomal homeostasis. In Xenopus tropicalis (Western clawed frog), this protein is Protein spinster homolog 1 (spns1).